We begin with the raw amino-acid sequence, 523 residues long: Glucose-1-phosphate adenylyltransferase large subunit 1, chloroplastic/amyloplastic (523 aa).

The transit peptide at 1-49 (MSSMQFSSVLPLEGKACVSPVRREGSACERLKIGDSSSIRHERASRRMC) directs the protein to the chloroplast.

This sequence belongs to the bacterial/plant glucose-1-phosphate adenylyltransferase family. Heterotetramer. In terms of tissue distribution, starchy endosperm and roots.

It is found in the plastid. The protein resides in the chloroplast. It localises to the amyloplast. The catalysed reaction is alpha-D-glucose 1-phosphate + ATP + H(+) = ADP-alpha-D-glucose + diphosphate. The protein operates within glycan biosynthesis; starch biosynthesis. Its activity is regulated as follows. Highly active without 3'phosphoglycerate, and is only slightly affected by the activator 3'phosphoglycerate and inhibitor orthophosphate. In terms of biological role, this protein plays a role in synthesis of starch. It catalyzes the synthesis of the activated glycosyl donor, ADP-glucose from Glc-1-P and ATP. The protein is Glucose-1-phosphate adenylyltransferase large subunit 1, chloroplastic/amyloplastic of Hordeum vulgare (Barley).